A 121-amino-acid polypeptide reads, in one-letter code: Nitrogenase-stabilizing/protective protein NifW (121 aa).

Belongs to the NifW family. As to quaternary structure, homotrimer; associates with NifD.

In terms of biological role, may protect the nitrogenase Fe-Mo protein from oxidative damage. The protein is Nitrogenase-stabilizing/protective protein NifW of Leptothrix cholodnii (strain ATCC 51168 / LMG 8142 / SP-6) (Leptothrix discophora (strain SP-6)).